The primary structure comprises 341 residues: Adenine deaminase (341 aa).

Zn(2+) is bound by residues H17, H19, and H197. Residue E200 is the Proton donor of the active site. D278 is a Zn(2+) binding site. D279 is a substrate binding site.

It belongs to the metallo-dependent hydrolases superfamily. Adenosine and AMP deaminases family. Adenine deaminase type 2 subfamily. The cofactor is Zn(2+).

It carries out the reaction adenine + H2O + H(+) = hypoxanthine + NH4(+). In terms of biological role, catalyzes the hydrolytic deamination of adenine to hypoxanthine. Plays an important role in the purine salvage pathway and in nitrogen catabolism. The protein is Adenine deaminase of Chlorobium luteolum (strain DSM 273 / BCRC 81028 / 2530) (Pelodictyon luteolum).